Reading from the N-terminus, the 452-residue chain is Putative purine permease CPE0397 (452 aa).

12 consecutive transmembrane segments (helical) span residues 34-54 (IFAA…SLGF), 58-78 (VTTA…IIQA), 83-103 (KVGA…SPAI), 108-128 (VLGL…EVIL), 138-158 (FFPP…LLPV), 172-192 (YASL…LLLN), 201-221 (SASI…LGLV), 250-270 (MAFI…LKAI), 326-346 (AVMA…AAII), 348-368 (GIPN…VAAA), 383-403 (LLII…PDVI), and 412-432 (MIFS…NAVL).

This sequence belongs to the nucleobase:cation symporter-2 (NCS2) (TC 2.A.40) family.

It localises to the cell membrane. The protein is Putative purine permease CPE0397 (cpx) of Clostridium perfringens (strain 13 / Type A).